The following is a 512-amino-acid chain: Maturase K (512 aa).

The protein belongs to the intron maturase 2 family. MatK subfamily.

The protein localises to the plastid. It localises to the chloroplast. Usually encoded in the trnK tRNA gene intron. Probably assists in splicing its own and other chloroplast group II introns. The chain is Maturase K from Filarum manserichense.